Here is a 102-residue protein sequence, read N- to C-terminus: Trp operon repressor homolog (102 aa).

The DNA-binding element occupies 59–82 (QRQISQMLGVGIATITRGSNELKL).

This sequence belongs to the TrpR family. As to quaternary structure, homodimer.

It localises to the cytoplasm. This protein is an aporepressor. When complexed with L-tryptophan it binds the operator region of the trp operon and prevents the initiation of transcription. The protein is Trp operon repressor homolog of Vibrio vulnificus (strain CMCP6).